An 874-amino-acid polypeptide reads, in one-letter code: Protein translocase subunit SecA (874 aa).

ATP contacts are provided by residues Gln-87, 105 to 109 (GEGKT), and Asp-512. Residues Cys-859, Cys-861, Cys-870, and His-871 each coordinate Zn(2+).

This sequence belongs to the SecA family. Monomer and homodimer. Part of the essential Sec protein translocation apparatus which comprises SecA, SecYEG and auxiliary proteins SecDF-YajC and YidC. The cofactor is Zn(2+).

It is found in the cell inner membrane. It localises to the cytoplasm. The catalysed reaction is ATP + H2O + cellular proteinSide 1 = ADP + phosphate + cellular proteinSide 2.. Part of the Sec protein translocase complex. Interacts with the SecYEG preprotein conducting channel. Has a central role in coupling the hydrolysis of ATP to the transfer of proteins into and across the cell membrane, serving both as a receptor for the preprotein-SecB complex and as an ATP-driven molecular motor driving the stepwise translocation of polypeptide chains across the membrane. The chain is Protein translocase subunit SecA from Buchnera aphidicola subsp. Schizaphis graminum (strain Sg).